A 658-amino-acid polypeptide reads, in one-letter code: DNA-binding protein Rfx5 (658 aa).

A compositionally biased stretch (basic and acidic residues) spans 1–10; the sequence is MAEDKPDAKS. The tract at residues 1–28 is disordered; that stretch reads MAEDKPDAKSPKTGARPQGGADAGEPTT. A2 is subject to N-acetylalanine. Residue S10 is modified to Phosphoserine. The interval 24 to 89 is N-terminal domain; the sequence is GEPTTLLQRL…PSLLSNEEYM (66 aa). The segment at 61 to 65 is leucine-rich region; critical for dimer formation and for interaction with RFXAP; sequence LYLYL. The RFX-type winged-helix DNA-binding region spans 91–167; the sequence is AYRWIRNHLE…YCYSGIRRKT (77 aa). Positions 172-177 match the PxLPxI/L motif; mediates interaction with RFXANK motif; sequence PPLPGL. A Phosphoserine modification is found at S184. Disordered regions lie at residues 250 to 315, 382 to 422, 443 to 602, and 624 to 658; these read LAEE…SSVP, AGPG…GLGA, VPPR…DKIP, and KGEA…ATPP. Over residues 277 to 309 the composition is skewed to basic and acidic residues; that stretch reads GPKKPERPAQPPKEQEARAGTDLPGRAERKKSV. 2 stretches are compositionally biased toward gly residues: residues 382–398 and 406–422; these read AGPG…GPGP and PGLG…GLGA. Basic and acidic residues-rich tracts occupy residues 465-476 and 489-498; these read PRPHDKGIKRTA and PVKEMKHETQ. Residues 506–516 show a composition bias toward basic residues; the sequence is KRKRGRPRKKP. Over residues 648-658 the composition is skewed to basic and acidic residues; sequence PEHKDPKATPP.

The protein belongs to the RFX family. As to quaternary structure, homodimer. The RFX heterotetrameric complex consists of 2 molecules of RFX5 and one each of RFXAP and RFX-B/RFXANK; with each subunit representing a separate complementation group. Interacts (via PxLPxI/L motif) with RFXANK (via ankyrin repeats); the interaction is direct. RFX forms cooperative DNA binding complexes with X2BP and CBF/NF-Y. RFX associates with CIITA to form an active transcriptional complex. Phosphorylated.

The protein resides in the nucleus. In terms of biological role, activates transcription from class II MHC promoters. Recognizes X-boxes. Mediates cooperative binding between RFX and NF-Y. RFX binds the X1 box of MHC-II promoters. The protein is DNA-binding protein Rfx5 (Rfx5) of Mus musculus (Mouse).